Here is a 303-residue protein sequence, read N- to C-terminus: Polyisoprenyl-teichoic acid--peptidoglycan teichoic acid transferase TagU (303 aa).

The Cytoplasmic portion of the chain corresponds to methionine 1–lysine 4. A helical; Signal-anchor for type II membrane protein membrane pass occupies residues isoleucine 5 to tyrosine 25. Topologically, residues asparagine 26–lysine 303 are extracellular.

Belongs to the LytR/CpsA/Psr (LCP) family.

It localises to the cell membrane. Its pathway is cell wall biogenesis. Its function is as follows. May catalyze the final step in cell wall teichoic acid biosynthesis, the transfer of the anionic cell wall polymers (APs) from their lipid-linked precursor to the cell wall peptidoglycan (PG). This Bacillus anthracis (strain A0248) protein is Polyisoprenyl-teichoic acid--peptidoglycan teichoic acid transferase TagU.